Consider the following 390-residue polypeptide: LL-diaminopimelate aminotransferase (390 aa).

5 residues coordinate substrate: Y13, G38, K102, Y126, and N176. Residues 101 to 102 (SK), Y126, N176, Y207, and 235 to 237 (SVS) each bind pyridoxal 5'-phosphate. At K238 the chain carries N6-(pyridoxal phosphate)lysine. Residue R246 participates in pyridoxal 5'-phosphate binding. Substrate is bound at residue R364.

The protein belongs to the class-I pyridoxal-phosphate-dependent aminotransferase family. LL-diaminopimelate aminotransferase subfamily. Homodimer. Requires pyridoxal 5'-phosphate as cofactor.

The catalysed reaction is (2S,6S)-2,6-diaminopimelate + 2-oxoglutarate = (S)-2,3,4,5-tetrahydrodipicolinate + L-glutamate + H2O + H(+). Its pathway is amino-acid biosynthesis; L-lysine biosynthesis via DAP pathway; LL-2,6-diaminopimelate from (S)-tetrahydrodipicolinate (aminotransferase route): step 1/1. In terms of biological role, involved in the synthesis of meso-diaminopimelate (m-DAP or DL-DAP), required for both lysine and peptidoglycan biosynthesis. Catalyzes the direct conversion of tetrahydrodipicolinate to LL-diaminopimelate. Is also able to catalyze the reverse reaction in vitro, i.e. the transamination of LL-diaminopimelate with 2-oxoglutarate to produce tetrahydrodipicolinate and glutamate. Can also use m-DAP instead of LL-DAP as the amino-group donor, and oxaloacetate instead of 2-oxoglutarate as the amino-group acceptor. This chain is LL-diaminopimelate aminotransferase, found in Moorella thermoacetica (strain ATCC 39073 / JCM 9320).